We begin with the raw amino-acid sequence, 198 residues long: DnaJ homolog subfamily C member 12 (198 aa).

Position 1 is an N-acetylmethionine (Met1). Residues 14 to 79 (DYYTLLGCDE…ESRARYDHWR (66 aa)) form the J domain. Residues 114–156 (EESDKTHTTKMENEECNEQRERKKEELASTAEKTEQKEPKPLE) show a composition bias toward basic and acidic residues. Residues 114–169 (EESDKTHTTKMENEECNEQRERKKEELASTAEKTEQKEPKPLEKSVSPQNSDSSGF) are disordered. Ser160, Ser166, and Ser182 each carry phosphoserine.

Interacts with HSPA8. Interacts with TPH1. Interacts with TPH2. Expressed at high levels in brain, heart, and testis, and at reduced levels in kidney and stomach.

The protein resides in the cytoplasm. Its function is as follows. Probable co-chaperone that participates in the proper folding of biopterin-dependent aromatic amino acid hydroxylases, which include phenylalanine-4-hydroxylase (PAH), tyrosine 3-monooxygenase (TH) and peripheral and neuronal tryptophan hydroxylases (TPH1 and TPH2). In Homo sapiens (Human), this protein is DnaJ homolog subfamily C member 12 (DNAJC12).